Reading from the N-terminus, the 113-residue chain is Large ribosomal subunit protein bL19 (113 aa).

The protein belongs to the bacterial ribosomal protein bL19 family.

This protein is located at the 30S-50S ribosomal subunit interface and may play a role in the structure and function of the aminoacyl-tRNA binding site. This is Large ribosomal subunit protein bL19 from Corynebacterium kroppenstedtii (strain DSM 44385 / JCM 11950 / CIP 105744 / CCUG 35717).